A 158-amino-acid chain; its full sequence is SH3 domain-binding glutamic acid-rich protein homolog (158 aa).

Positions 40 to 51 are enriched in basic and acidic residues; it reads TEPGKESEKELM. The interval 40-74 is disordered; that stretch reads TEPGKESEKELMQNKSTSNGGTVSDPEPRHPLPPQ. Positions 52–61 are enriched in polar residues; sequence QNKSTSNGGT. The SH3-binding signature appears at 67–73; that stretch reads PRHPLPP. Position 109 is a phosphothreonine (T109). The segment at 118–158 is disordered; it reads LKQENGDAKKEEAETEAEDKKTEAGDGDVDVKEEAAEKAEV.

The protein belongs to the SH3BGR family.

The polypeptide is SH3 domain-binding glutamic acid-rich protein homolog (Sh3beta) (Drosophila melanogaster (Fruit fly)).